Here is a 143-residue protein sequence, read N- to C-terminus: Peptide methionine sulfoxide reductase MsrB (143 aa).

The MsrB domain maps to 16 to 139 (DAELRRRLTP…NSAALNFESR (124 aa)). 4 residues coordinate Zn(2+): cysteine 55, cysteine 58, cysteine 104, and cysteine 107. The active-site Nucleophile is the cysteine 128.

The protein belongs to the MsrB Met sulfoxide reductase family. The cofactor is Zn(2+).

The enzyme catalyses L-methionyl-[protein] + [thioredoxin]-disulfide + H2O = L-methionyl-(R)-S-oxide-[protein] + [thioredoxin]-dithiol. This chain is Peptide methionine sulfoxide reductase MsrB, found in Burkholderia ambifaria (strain ATCC BAA-244 / DSM 16087 / CCUG 44356 / LMG 19182 / AMMD) (Burkholderia cepacia (strain AMMD)).